The chain runs to 232 residues: Heptaprenylglyceryl phosphate synthase (232 aa).

Lysine 12 serves as a coordination point for sn-glycerol 1-phosphate. The Mg(2+) site is built by aspartate 14 and threonine 40. Sn-glycerol 1-phosphate is bound by residues 159–164 (YLEYSG), glycine 189, and 209–210 (GN).

The protein belongs to the GGGP/HepGP synthase family. Group I subfamily. In terms of assembly, homodimer. Mg(2+) is required as a cofactor.

The enzyme catalyses sn-glycerol 1-phosphate + all-trans-heptaprenyl diphosphate = 3-heptaprenyl-sn-glycero-1-phosphate + diphosphate. It participates in membrane lipid metabolism; glycerophospholipid metabolism. Prenyltransferase that catalyzes in vivo the transfer of the heptaprenyl moiety of heptaprenyl pyrophosphate (HepPP; 35 carbon atoms) to the C3 hydroxyl of sn-glycerol-1-phosphate (G1P), producing heptaprenylglyceryl phosphate (HepGP). This reaction is an ether-bond-formation step in the biosynthesis of archaea-type G1P-based membrane lipids found in Bacillales. The polypeptide is Heptaprenylglyceryl phosphate synthase (Shouchella clausii (strain KSM-K16) (Alkalihalobacillus clausii)).